Consider the following 159-residue polypeptide: Protein A40 (159 aa).

Residues 1 to 9 are Cytoplasmic-facing; that stretch reads MNKHKTDYA. The chain crosses the membrane as a helical; Signal-anchor for type II membrane protein span at residues 10 to 30; sequence GYACCVICGLIVGIIFTATLL. Residues 31 to 159 are Extracellular-facing; that stretch reads KVVERKLVHT…TPKLHSCYTI (129 aa). The C-type lectin domain maps to 63-159; it reads YNNKCIHLST…TPKLHSCYTI (97 aa).

It belongs to the poxviridae A40 protein family.

Its subcellular location is the host membrane. The sequence is that of Protein A40 from Bos taurus (Bovine).